The chain runs to 169 residues: Styrene-oxide isomerase (169 aa).

4 consecutive transmembrane segments (helical) span residues 13-33 (GILMIFCTLLFGVGLWMHLVG), 61-81 (PALNGMMVIAVAFVLPSLGFA), 85-105 (PHLLGNIIILDGWANVGFYFF), and 129-149 (FLALAPAYLFGVLAMGALAVI).

It localises to the membrane. It catalyses the reaction styrene oxide = 2-phenylacetaldehyde. It functions in the pathway aromatic compound metabolism. In terms of biological role, epoxystyrene isomerase that catalyzes the second step in the aerobic styrene degradation pathway by converting epoxystyrene to phenylacetaldehyde. The protein is Styrene-oxide isomerase (styC) of Pseudomonas fluorescens.